The sequence spans 845 residues: ATP-binding cassette sub-family F member 1 (845 aa).

Residues methionine 1–leucine 261 are disordered. Residues serine 22 and serine 24 each carry the phosphoserine modification. The span at lysine 29–lysine 39 shows a compositional bias: basic residues. Positions valine 47–glutamine 64 are enriched in basic and acidic residues. Basic residues predominate over residues glutamine 73–lysine 85. The residue at position 105 (serine 105) is a Phosphoserine. Threonine 108 carries the post-translational modification Phosphothreonine. 2 positions are modified to phosphoserine; by CK2: serine 109 and serine 140. Over residues glutamate 147–arginine 160 the composition is skewed to basic and acidic residues. The residue at position 166 (serine 166) is a Phosphoserine. Residues glutamate 206 to glutamine 226 show a composition bias toward basic and acidic residues. The span at glycine 227–glycine 241 shows a compositional bias: acidic residues. Phosphoserine is present on serine 228. In terms of domain architecture, ABC transporter 1 spans isoleucine 304–leucine 548. An ATP-binding site is contributed by glycine 336–threonine 343. A compositionally biased stretch (basic and acidic residues) spans lysine 559 to threonine 580. Residues lysine 559 to leucine 602 are disordered. Position 595 is a phosphoserine (serine 595). The region spanning leucine 625–valine 840 is the ABC transporter 2 domain. Glycine 658–serine 665 lines the ATP pocket.

This sequence belongs to the ABC transporter superfamily. ABCF family. EF3 subfamily. As to quaternary structure, isoform 2 interacts (via N-terminus) with EIF2S1; the interaction is independent of its phosphorylated status. Isoform 2 associates (via both ABC transporter domains) with the ribosomes. Post-translationally, isoform 2 is phosphorylated at phosphoserine and phosphothreonine. Isoform 2 phosphorylation on Ser-109 and Ser-140 by CK2 inhibits association of EIF2 with ribosomes. Ubiquitous.

The protein localises to the cytoplasm. It is found in the nucleus. It localises to the nucleoplasm. Its subcellular location is the nucleus envelope. Isoform 2 is required for efficient Cap- and IRES-mediated mRNA translation initiation. Isoform 2 is not involved in the ribosome biogenesis. The sequence is that of ATP-binding cassette sub-family F member 1 (ABCF1) from Homo sapiens (Human).